Consider the following 427-residue polypeptide: MSSIVVVGTQWGDEGKGKITDFLAEQADVIARFSGGNNAGHTIQFGGETYKLHLVPSGIFYKDKLAVIGNGVVVDPVALLKELDGLNERGISTDNLRISNRAQVILPYHLAQDEYEERRRGDNKIGTTKKGIGPAYVDKAQRIGIRMADLLEKETFERRLKENIEYKNAYFKGMFNETCPTFDEIFDEYYAAGQRLKDYVTDTAKILDDANVADEKVLFEGAQGVMLDIDHGTYPFVTSSNPVAGNVTVGTGVGPTSVSKVIGVCKSYTSRVGDGPFPTELFDEDGHHIREVGREYGTTTGRPRRVGWFDSVVLRHSRRVSGITDLSINSIDVLTGLDTVKICTAYELDGEKITEYPANLDQLRRCKPIFEELPGWTEDITGCRSLDELPENARNYLERISELCGVHISIFSVGPDREQTNLLEQLW.

GTP is bound by residues 12-18 and 40-42; these read GDEGKGK and GHT. The active-site Proton acceptor is the D13. Mg(2+) is bound by residues D13 and G40. Residues 13-16, 38-41, T128, R142, Q223, T238, and R302 contribute to the IMP site; these read DEGK and NAGH. H41 (proton donor) is an active-site residue. 298–304 provides a ligand contact to substrate; it reads TTTGRPR. GTP is bound by residues R304, 330–332, and 412–414; these read SID and SVG.

This sequence belongs to the adenylosuccinate synthetase family. In terms of assembly, homodimer. Mg(2+) is required as a cofactor.

The protein localises to the cytoplasm. It catalyses the reaction IMP + L-aspartate + GTP = N(6)-(1,2-dicarboxyethyl)-AMP + GDP + phosphate + 2 H(+). It functions in the pathway purine metabolism; AMP biosynthesis via de novo pathway; AMP from IMP: step 1/2. Functionally, plays an important role in the de novo pathway of purine nucleotide biosynthesis. Catalyzes the first committed step in the biosynthesis of AMP from IMP. This Staphylococcus epidermidis (strain ATCC 35984 / DSM 28319 / BCRC 17069 / CCUG 31568 / BM 3577 / RP62A) protein is Adenylosuccinate synthetase.